The chain runs to 458 residues: Transmembrane protein 143 (458 aa).

2 helical membrane passes run 277-297 and 298-318; these read LLNL…GMVI and LSDL…FMGV. Position 329 is a phosphoserine (Ser329).

The protein resides in the membrane. The chain is Transmembrane protein 143 (Tmem143) from Mus musculus (Mouse).